Reading from the N-terminus, the 219-residue chain is 2-hydroxy-3-keto-5-methylthiopentenyl-1-phosphate phosphatase (219 aa).

This sequence belongs to the HAD-like hydrolase superfamily. MtnX family.

It catalyses the reaction 2-hydroxy-5-methylsulfanyl-3-oxopent-1-enyl phosphate + H2O = 1,2-dihydroxy-5-(methylsulfanyl)pent-1-en-3-one + phosphate. It participates in amino-acid biosynthesis; L-methionine biosynthesis via salvage pathway; L-methionine from S-methyl-5-thio-alpha-D-ribose 1-phosphate: step 4/6. In terms of biological role, dephosphorylates 2-hydroxy-3-keto-5-methylthiopentenyl-1-phosphate (HK-MTPenyl-1-P) yielding 1,2-dihydroxy-3-keto-5-methylthiopentene (DHK-MTPene). This chain is 2-hydroxy-3-keto-5-methylthiopentenyl-1-phosphate phosphatase, found in Bacillus cereus (strain B4264).